Reading from the N-terminus, the 469-residue chain is Glutamate--tRNA ligase (469 aa).

A 'HIGH' region motif is present at residues 9 to 19; sequence PSPTGFLHVGG. Residues Cys-98, Cys-100, Cys-125, and Asp-127 each contribute to the Zn(2+) site. Positions 236–240 match the 'KMSKS' region motif; the sequence is KLSKR. ATP is bound at residue Lys-239.

The protein belongs to the class-I aminoacyl-tRNA synthetase family. Glutamate--tRNA ligase type 1 subfamily. In terms of assembly, monomer. It depends on Zn(2+) as a cofactor.

It localises to the cytoplasm. It carries out the reaction tRNA(Glu) + L-glutamate + ATP = L-glutamyl-tRNA(Glu) + AMP + diphosphate. Functionally, catalyzes the attachment of glutamate to tRNA(Glu) in a two-step reaction: glutamate is first activated by ATP to form Glu-AMP and then transferred to the acceptor end of tRNA(Glu). The sequence is that of Glutamate--tRNA ligase from Shewanella halifaxensis (strain HAW-EB4).